Consider the following 174-residue polypeptide: Methylated-DNA--protein-cysteine methyltransferase (174 aa).

C141 (nucleophile; methyl group acceptor) is an active-site residue.

This sequence belongs to the MGMT family.

It is found in the cytoplasm. It carries out the reaction a 6-O-methyl-2'-deoxyguanosine in DNA + L-cysteinyl-[protein] = S-methyl-L-cysteinyl-[protein] + a 2'-deoxyguanosine in DNA. The catalysed reaction is a 4-O-methyl-thymidine in DNA + L-cysteinyl-[protein] = a thymidine in DNA + S-methyl-L-cysteinyl-[protein]. In terms of biological role, involved in the cellular defense against the biological effects of O6-methylguanine (O6-MeG) and O4-methylthymine (O4-MeT) in DNA. Repairs the methylated nucleobase in DNA by stoichiometrically transferring the methyl group to a cysteine residue in the enzyme. This is a suicide reaction: the enzyme is irreversibly inactivated. The chain is Methylated-DNA--protein-cysteine methyltransferase from Thermococcus gammatolerans (strain DSM 15229 / JCM 11827 / EJ3).